The primary structure comprises 504 residues: Cytochrome P450 4A25 (504 aa).

Helical transmembrane passes span 6–26 (LASA…LLLL) and 110–130 (APVL…LLNG). Cys-451 contributes to the heme binding site.

This sequence belongs to the cytochrome P450 family. The cofactor is heme.

It localises to the endoplasmic reticulum membrane. It carries out the reaction an omega-methyl-long-chain fatty acid + reduced [NADPH--hemoprotein reductase] + O2 = an omega-hydroxy-long-chain fatty acid + oxidized [NADPH--hemoprotein reductase] + H2O + H(+). Its function is as follows. Catalyzes the omega- and (omega-1)-hydroxylation of various fatty acids such as laurate and palmitate. Has no activity toward taurochenodeoxycholic acid. The protein is Cytochrome P450 4A25 (CYP4A25) of Sus scrofa (Pig).